Here is a 394-residue protein sequence, read N- to C-terminus: DNA replication and repair protein RecF (394 aa).

An ATP-binding site is contributed by 30 to 37; the sequence is GSNGQGKT.

It belongs to the RecF family.

It is found in the cytoplasm. The RecF protein is involved in DNA metabolism; it is required for DNA replication and normal SOS inducibility. RecF binds preferentially to single-stranded, linear DNA. It also seems to bind ATP. The protein is DNA replication and repair protein RecF of Cutibacterium acnes (strain DSM 16379 / KPA171202) (Propionibacterium acnes).